Consider the following 361-residue polypeptide: Probable G-protein coupled receptor 25 (361 aa).

Residues 1–39 are Extracellular-facing; sequence MAPTEPWSPSPGSAPWDYSGLDGLEELELCPAGDLPYGY. The helical transmembrane segment at 40–60 threads the bilayer; it reads VYIPALYLAAFAVGLLGNAFV. Topologically, residues 61 to 75 are cytoplasmic; sequence VWLLAGRRGPRRLVD. The chain crosses the membrane as a helical span at residues 76–96; that stretch reads TFVLHLAAADLGFVLTLPLWA. At 97–126 the chain is on the extracellular side; that stretch reads AAAALGGRWPFGDGLCKLSSFALAGTRCAG. The helical transmembrane segment at 127–147 threads the bilayer; sequence ALLLAGMSVDRYLAVVKLLEA. Residues 148 to 155 are Cytoplasmic-facing; that stretch reads RPLRTPRC. A helical transmembrane segment spans residues 156-176; it reads ALASCCGVWAVALLAGLPSLV. Topologically, residues 177–200 are extracellular; it reads YRGLQPLPGGQDSQCGEEPSHAFQ. Residues 201 to 220 traverse the membrane as a helical segment; that stretch reads GLSLLLLLLTFVLPLVVTLF. The Cytoplasmic portion of the chain corresponds to 221–242; the sequence is CYCRISRRLRRPPHVGRARRNS. A helical membrane pass occupies residues 243-263; that stretch reads LRIIFAIESTFVGSWLPFSAL. Residues 264-289 are Extracellular-facing; it reads RAVFHLARLGALPLPCPLLLALRWGL. The helical transmembrane segment at 290–310 threads the bilayer; it reads TIATCLAFVNSCANPLIYLLL. Residues 311 to 361 lie on the Cytoplasmic side of the membrane; that stretch reads DRSFRARALDGACGRTGRLARRISSASSLSRDDSSVFRCRAQAANTASASW.

This sequence belongs to the G-protein coupled receptor 1 family.

It is found in the cell membrane. Orphan receptor. The chain is Probable G-protein coupled receptor 25 (GPR25) from Homo sapiens (Human).